The sequence spans 1049 residues: Cilia- and flagella-associated protein 337 (1049 aa).

The region spanning 81-116 is the EF-hand domain; that stretch reads GTKEEYGELFDKVDVAQDGFINWDKLTSFILLELYE. WD repeat units follow at residues 138 to 177, 358 to 397, 401 to 440, 487 to 528, 531 to 570, and 633 to 671; these read KHKDTIQKVIFLKNSSHYLTISKEGLLAIWGEHLKLQETF, NIAQGIHAFDYHSRLNLIATAGINNKVCLWNPYVVSKPVG, GHSASVIAVQFFVERKQLFSFSKDKVLRLWDIQHQLSIQR, SHEK…KQFT, HGNAEISTMALDANETRLLTGSTDGTVKIWDFNGYCHHTL, and QHHDDILCAAFLPPQTLVTGSYDGEIVLWNNSTENAHHV. The segment at 691-712 is disordered; that stretch reads LLSAGRSQPSHPMADHSTTGVR. The span at 695–711 shows a compositional bias: polar residues; the sequence is GRSQPSHPMADHSTTGV. WD repeat units lie at residues 719 to 766, 769 to 809, and 825 to 866; these read EGKN…LLAE, AHSG…LNSS, and PHED…VWIF.

The protein belongs to the CFAP337 family. As to quaternary structure, associates with components of the nexin-dynein regulatory complex (N-DRC) and the CFAP184:CFAP263 complex.

Its subcellular location is the cell projection. It is found in the cilium. Its function is as follows. Associates with components of the nexin-dynein regulatory complex (N-DRC), a key regulator of ciliary/flagellar motility, and might act as an inner dynein arm (IDA) hub or linkage. The protein is Cilia- and flagella-associated protein 337 of Homo sapiens (Human).